The sequence spans 5596 residues: Midasin (5596 aa).

M1 is subject to N-acetylmethionine. AAA-ATPase protomer stretches follow at residues 307-591 (SVCK…TSKL), 659-978 (LIEQ…ASNP), 1048-1316 (KEPT…QEEI), and 1362-1616 (HIVW…NKMG). 329 to 336 (GPIGCGKT) contributes to the ATP binding site. The segment at 517–537 (SSVGCEQAPEEVSEARRENKR) is disordered. ATP is bound by residues 677–684 (GETGTGKT) and 1084–1091 (GETSVGKT). Phosphothreonine is present on T1177. 1390-1397 (GDTGCGKT) lines the ATP pocket. At K1683 the chain carries N6-acetyllysine. AAA-ATPase protomer stretches follow at residues 1738–1995 (RLLR…AVFK) and 2053–2313 (MKCV…IYIS). Residues 1753-1760 (GSPGVGKT) and 2066-2073 (GPASVGKT) contribute to the ATP site. The residue at position 1754 (S1754) is a Phosphoserine. Residues 2418-4691 (SLRAHETWGD…EGEGMKDVSD (2274 aa)) are linker. The interval 3989–4008 (LVESDKEEQPDFLPRPTDGA) is disordered. T4212 is modified (phosphothreonine). S4538 carries the phosphoserine modification. 2 disordered regions span residues 4669–4688 (ATEFHDYEGGGIGEGEGMKD) and 4700–5260 (EDTF…SRES). Residues 4702–4724 (TFQKGQEKDKEDPDSKSDIKGED) are compositionally biased toward basic and acidic residues. Residues 4741–4757 (ELEEQEEDDEKSDSEGG) show a composition bias toward acidic residues. Phosphoserine occurs at positions 4752 and 4754. The span at 4758–4780 (DLDKHMGDLNGEEADKLDERLWG) shows a compositional bias: basic and acidic residues. Over residues 4781-4794 (DDDEEEDEEEEDNK) the composition is skewed to acidic residues. Positions 4822-4834 (NKDKSQQDKKEEK) are enriched in basic and acidic residues. Positions 4835 to 4844 (EEAEADDGGQ) are enriched in acidic residues. Residues 4845–4855 (GEDKINEQIDE) are compositionally biased toward basic and acidic residues. Residues 4877–4888 (EALDLPDDLNLD) show a composition bias toward acidic residues. S4889 carries the phosphoserine modification. The span at 4896–4908 (EDTDNEEGEEENP) shows a compositional bias: acidic residues. The residue at position 4898 (T4898) is a Phosphothreonine. The segment covering 4909-4928 (LEIKEKPEEAGHEAEERGET) has biased composition (basic and acidic residues). Phosphoserine occurs at positions 4937 and 4946. Acidic residues predominate over residues 4940–4966 (EPEEGPSEDDKAEGEEEMDTGADDQDG). The segment covering 4968–4989 (AAQHPEEHSEEQQQSVEEKDKE) has biased composition (basic and acidic residues). Residues 5007 to 5021 (QEEEEREDSDTEEQV) show a composition bias toward acidic residues. S5015 carries the phosphoserine modification. A compositionally biased stretch (polar residues) spans 5033-5046 (CGQTGVENMQNTQA). Residues 5054–5064 (PEKEQGKEEHG) show a composition bias toward basic and acidic residues. Residues 5088–5101 (KHTRKNTQSFKRKP) show a composition bias toward basic residues. The span at 5105-5115 (DNERSMGDHNE) shows a compositional bias: basic and acidic residues. Positions 5132 to 5141 (QGPAQQPQAQ) are enriched in low complexity. Over residues 5181 to 5197 (QEEEEIEDTLMDTEEQE) the composition is skewed to acidic residues. Basic and acidic residues-rich tracts occupy residues 5198–5213 (EFKAADVEQLKPEEIK) and 5233–5260 (KTEEDQDPRTDKAHKETENEKPERSRES). A VWFA domain is found at 5384-5583 (QICLAIDDSS…ALPETLSDAL (200 aa)).

The protein belongs to the midasin family. Associates with pre-60S ribosomes in the nucleoplasm. Interacts (via its hexameric AAA ATPase ring) with the PELP1 complex (via PELP1); the interaction is regulated by SUMO conjugation of PELP1 and is crucial for recruitment of MDN1 to the pre-ribosomal particle. Interacts (via VWFA/MIDAS domain) with WDR12 (via UBL domain). Interacts (via VWFA/MIDAS domain) with NLE1 (via UBL domain).

Its subcellular location is the nucleus. It localises to the nucleolus. The protein localises to the nucleoplasm. It is found in the cytoplasm. Its function is as follows. Nuclear chaperone required for maturation and nuclear export of pre-60S ribosome subunits. Functions at successive maturation steps to remove ribosomal factors at critical transition points, first driving the exit of early pre-60S particles from the nucleolus and then driving late pre-60S particles from the nucleus. At an early stage in 60S maturation, mediates the dissociation of the PeBoW complex (PES1-BOP1-WDR12) from early pre-60S particles, rendering them competent for export from the nucleolus to the nucleoplasm. Subsequently recruited to the nucleoplasmic particles through interaction with SUMO-conjugated PELP1 complex. This binding is only possible if the 5S RNP at the central protuberance has undergone the rotation to complete its maturation. The polypeptide is Midasin (MDN1) (Homo sapiens (Human)).